The primary structure comprises 346 residues: Calcium uniporter protein, mitochondrial (346 aa).

At 1 to 195 the chain is on the mitochondrial matrix side; it reads MTKGKLLTTP…ECDKAAHRGA (195 aa). Positions 55-120 are disordered; sequence ELPPPDPQDS…GEGKDEGEFV (66 aa). Basic and acidic residues-rich tracts occupy residues 76 to 91 and 109 to 119; these read MEAK…KADT and REGEGKDEGEF. A helical transmembrane segment spans residues 196–216; the sequence is QRIALAGCGGLIGYWYIVYRL. Topologically, residues 217 to 226 are mitochondrial intermembrane; the sequence is TFETDLGWDV. The Selectivity filter signature appears at 224–232; that stretch reads WDVMEPVTY. The helical transmembrane segment at 227–248 threads the bilayer; it reads MEPVTYLVGLSTLIGGYMWFLW. A Ca(2+)-binding site is contributed by Glu228. Topologically, residues 249–346 are mitochondrial matrix; that stretch reads HNREVSYRSA…KEGEEDDEDD (98 aa). The interval 306–346 is disordered; the sequence is WNETQDEGGDEKVTKALRDERKNNNGTKNKSKEGEEDDEDD. Basic and acidic residues predominate over residues 315–328; it reads DEKVTKALRDERKN.

This sequence belongs to the MCU (TC 1.A.77) family. In terms of assembly, homotetramer, assembles in a dimer or dimers configuration with two interfaces.

It localises to the mitochondrion inner membrane. The enzyme catalyses Ca(2+)(in) = Ca(2+)(out). Its function is as follows. Highly selective calcium channel localized to the inner mitochondrial membrane, which mediates calcium uptake into the mitochondrial matrix. Mitochondrial calcium homeostasis plays key roles in cellular physiology and regulates ATP production, cytoplasmic calcium signals and activation of cell death pathways. Sufficient to operate as a pore-forming channel without the need of calcium-sensor or auxiliary subunit. This is Calcium uniporter protein, mitochondrial from Cyphellophora europaea (strain CBS 101466) (Phialophora europaea).